A 494-amino-acid chain; its full sequence is Cytochrome P450 2A6 (494 aa).

Residues phenylalanine 107 and asparagine 297 each coordinate substrate. Heme is bound at residue cysteine 439.

The protein belongs to the cytochrome P450 family. Heme serves as cofactor. In terms of tissue distribution, liver.

It localises to the endoplasmic reticulum membrane. It is found in the microsome membrane. The catalysed reaction is 1,4-cineole + reduced [NADPH--hemoprotein reductase] + O2 = 2-exo-hydroxy-1,4-cineole + oxidized [NADPH--hemoprotein reductase] + H2O + H(+). Exhibits a high coumarin 7-hydroxylase activity. Can act in the hydroxylation of the anti-cancer drugs cyclophosphamide and ifosphamide. Competent in the metabolic activation of aflatoxin B1. Constitutes the major nicotine C-oxidase. Acts as a 1,4-cineole 2-exo-monooxygenase. Possesses low phenacetin O-deethylation activity. This Homo sapiens (Human) protein is Cytochrome P450 2A6 (CYP2A6).